Reading from the N-terminus, the 702-residue chain is MKLILSTLIVFIHTLLVSALPTKEGSDPNSAKKYLVSDLPGLHENITPDNSIPLMFAGQLEIYPETDTHYFFWKFSDSNPETVTNRTIFWLNGGPGCSSMDGALLETGPFRINSQQQVISNNGSWHRMGDIIYVDQPAGTGFSYSDTYITDLDQVAEYFLKFMEKYYELFPEEIGYEIYFAGESYAGQYIPYIADAILQRNKKLVDGEHKYDLRGVLIGNGWVSPNEQSLSYLPFFKDHGLIDVHHPKWATLLAKHEQCQKIVNKIDSTFDDGVVHYYEVSSSTCEAILTDLLEYTQDTASEKDQRCVNMYDYTLRDSYPSCGMNWPYELVNVGPFLRQEKVMHQLNLINLKKWNECNGRVGRTFQARHSIPAVHLLPELAKEIPVMLFNGANDIICNSQGVLSYLQKLQWNGETGFTNKDNQISWIYDNKEVGYIIWERNISFINIYNSSHMVPYDLPDVSRALIDLITGKYDEKDVDGKKSFVTYPLGSRKESDASANGEENAGSDKVPGDSPSQTMDPMISSSTASSSSVESSLSSSTASADSDSTSSKFTRLIQLAVILVIFWGVYVLYASYKSRPSSIIKKPTNNTSNVTRSSAGKKKNVQWADQLNQFEDDERTQEPNQGIIAKAIGKITGSKDTRGRYAPVQRGNGNEYIDDIELGEGLSDPNVDEFIIGSDDDEEQGQAHSGAATHNQKQKPMN.

A signal peptide spans 1–19 (MKLILSTLIVFIHTLLVSA). Residues 20–555 (LPTKEGSDPN…SDSTSSKFTR (536 aa)) are Lumenal-facing. Residues Asn-85 and Asn-122 are each glycosylated (N-linked (GlcNAc...) asparagine). Catalysis depends on residues Ser-184 and Asp-394. N-linked (GlcNAc...) asparagine glycosylation is found at Asn-441 and Asn-449. The active site involves His-452. A disordered region spans residues 491–531 (SRKESDASANGEENAGSDKVPGDSPSQTMDPMISSSTASSS). The chain crosses the membrane as a helical span at residues 556-576 (LIQLAVILVIFWGVYVLYASY). The Cytoplasmic segment spans residues 577–702 (KSRPSSIIKK…THNQKQKPMN (126 aa)). 2 disordered regions span residues 582-603 (SIIK…GKKK) and 659-702 (DIEL…KPMN). Composition is skewed to polar residues over residues 587–598 (PTNNTSNVTRSS) and 692–702 (ATHNQKQKPMN).

Belongs to the peptidase S10 family.

It is found in the golgi apparatus. The protein resides in the trans-Golgi network membrane. The catalysed reaction is Preferential release of a C-terminal arginine or lysine residue.. In terms of biological role, protease with a carboxypeptidase B-like function involved in the C-terminal processing of the lysine and arginine residues from protein precursors. Promotes cell fusion and is involved in the programmed cell death. In Candida albicans (strain WO-1) (Yeast), this protein is Pheromone-processing carboxypeptidase KEX1 (KEX1).